A 27-amino-acid polypeptide reads, in one-letter code: Conotoxin flf14a (27 aa).

2 cysteine pairs are disulfide-bonded: C6/C26 and C10/C22.

As to expression, expressed by the venom duct.

Its subcellular location is the secreted. In Conus anabathrum floridanus (Florida cone), this protein is Conotoxin flf14a.